The following is a 262-amino-acid chain: Acyl-[acyl-carrier-protein]--UDP-N-acetylglucosamine O-acyltransferase (262 aa).

This sequence belongs to the transferase hexapeptide repeat family. LpxA subfamily. In terms of assembly, homotrimer.

The protein resides in the cytoplasm. The enzyme catalyses a (3R)-hydroxyacyl-[ACP] + UDP-N-acetyl-alpha-D-glucosamine = a UDP-3-O-[(3R)-3-hydroxyacyl]-N-acetyl-alpha-D-glucosamine + holo-[ACP]. The protein operates within glycolipid biosynthesis; lipid IV(A) biosynthesis; lipid IV(A) from (3R)-3-hydroxytetradecanoyl-[acyl-carrier-protein] and UDP-N-acetyl-alpha-D-glucosamine: step 1/6. Involved in the biosynthesis of lipid A, a phosphorylated glycolipid that anchors the lipopolysaccharide to the outer membrane of the cell. The sequence is that of Acyl-[acyl-carrier-protein]--UDP-N-acetylglucosamine O-acyltransferase from Wigglesworthia glossinidia brevipalpis.